Reading from the N-terminus, the 146-residue chain is Small ribosomal subunit protein uS15 (146 aa).

This sequence belongs to the universal ribosomal protein uS15 family. In terms of assembly, part of the 30S ribosomal subunit.

The chain is Small ribosomal subunit protein uS15 from Picrophilus torridus (strain ATCC 700027 / DSM 9790 / JCM 10055 / NBRC 100828 / KAW 2/3).